The sequence spans 133 residues: Profilin-2 (133 aa).

It belongs to the profilin family. Occurs in many kinds of cells as a complex with monomeric actin in a 1:1 ratio.

It localises to the cytoplasm. The protein resides in the cytoskeleton. Binds to actin and affects the structure of the cytoskeleton. At high concentrations, profilin prevents the polymerization of actin, whereas it enhances it at low concentrations. By binding to PIP2, it inhibits the formation of IP3 and DG. The protein is Profilin-2 of Artemisia vulgaris (Mugwort).